A 502-amino-acid chain; its full sequence is ATP synthase subunit alpha (502 aa).

169 to 176 (GDRQTGKT) contributes to the ATP binding site.

It belongs to the ATPase alpha/beta chains family. In terms of assembly, F-type ATPases have 2 components, CF(1) - the catalytic core - and CF(0) - the membrane proton channel. CF(1) has five subunits: alpha(3), beta(3), gamma(1), delta(1), epsilon(1). CF(0) has three main subunits: a(1), b(2) and c(9-12). The alpha and beta chains form an alternating ring which encloses part of the gamma chain. CF(1) is attached to CF(0) by a central stalk formed by the gamma and epsilon chains, while a peripheral stalk is formed by the delta and b chains.

The protein resides in the cell membrane. The catalysed reaction is ATP + H2O + 4 H(+)(in) = ADP + phosphate + 5 H(+)(out). In terms of biological role, produces ATP from ADP in the presence of a proton gradient across the membrane. The alpha chain is a regulatory subunit. The chain is ATP synthase subunit alpha from Bacillus pumilus (strain SAFR-032).